The following is a 412-amino-acid chain: Pentatricopeptide repeat-containing protein At3g60980, mitochondrial (412 aa).

The transit peptide at 1 to 18 (MSLIGRLNLGRRFCTAVP) directs the protein to the mitochondrion. PPR repeat units lie at residues 69-104 (TTTI…NLRP), 105-139 (NSHC…GQVH), 143-178 (SDDS…TTYP), 179-213 (DHVA…FLIA), 230-264 (VAFL…NRLL), 266-296 (CAET…LLDK), 305-339 (DSDT…NDYL), 344-371 (IITR…DFGY), and 373-407 (DVNT…TLKE).

It belongs to the PPR family. P subfamily.

It is found in the mitochondrion. This Arabidopsis thaliana (Mouse-ear cress) protein is Pentatricopeptide repeat-containing protein At3g60980, mitochondrial.